We begin with the raw amino-acid sequence, 433 residues long: Dihydrolipoyllysine-residue acetyltransferase component of pyruvate dehydrogenase complex (433 aa).

The region spanning 2 to 77 is the Lipoyl-binding domain; that stretch reads AFEFRLPDIG…VVGDVIVKID (76 aa). Position 43 is an N6-lipoyllysine (Lys-43). Disordered stretches follow at residues 80–134 and 164–204; these read DAEE…PSVR and YLNG…FPET. Basic and acidic residues-rich tracts occupy residues 84–103 and 117–126; these read MQFK…KEQE and EKTEVDESKT. The Peripheral subunit-binding (PSBD) domain maps to 128–165; sequence KAMPSVRKYARENGVNIKAVNGSGKNGRITKEDIDAYL. The span at 166-185 shows a compositional bias: low complexity; the sequence is NGGSSEEGSNTSAASESTSS. Residue His-404 is part of the active site.

Belongs to the 2-oxoacid dehydrogenase family. As to quaternary structure, forms a 24-polypeptide structural core with octahedral symmetry. Requires (R)-lipoate as cofactor.

It carries out the reaction N(6)-[(R)-dihydrolipoyl]-L-lysyl-[protein] + acetyl-CoA = N(6)-[(R)-S(8)-acetyldihydrolipoyl]-L-lysyl-[protein] + CoA. Its function is as follows. The pyruvate dehydrogenase complex catalyzes the overall conversion of pyruvate to acetyl-CoA and CO(2). It contains multiple copies of three enzymatic components: pyruvate dehydrogenase (E1), dihydrolipoamide acetyltransferase (E2) and lipoamide dehydrogenase (E3). In Staphylococcus epidermidis (strain ATCC 35984 / DSM 28319 / BCRC 17069 / CCUG 31568 / BM 3577 / RP62A), this protein is Dihydrolipoyllysine-residue acetyltransferase component of pyruvate dehydrogenase complex (pdhC).